We begin with the raw amino-acid sequence, 183 residues long: MFKQLRPALASLLVLSLVTGVAYPLLVTGIAQLAFPEQANGSLLRDAEGKVLGSRLIAQKFDGEEWFHSRPSAGDYATVSSAASNLAPSNPALAERIARDAAQERIADQGPVPLALVTTSGSGLDPQLPPQAARYQALRVATARGLPLRLVEDLVESHTERPLVGPAVVNVLALNMALAGLKR.

The helical transmembrane segment at 10–30 (ASLLVLSLVTGVAYPLLVTGI) threads the bilayer.

It belongs to the KdpC family. The system is composed of three essential subunits: KdpA, KdpB and KdpC.

The protein resides in the cell inner membrane. Its function is as follows. Part of the high-affinity ATP-driven potassium transport (or Kdp) system, which catalyzes the hydrolysis of ATP coupled with the electrogenic transport of potassium into the cytoplasm. This subunit acts as a catalytic chaperone that increases the ATP-binding affinity of the ATP-hydrolyzing subunit KdpB by the formation of a transient KdpB/KdpC/ATP ternary complex. The polypeptide is Potassium-transporting ATPase KdpC subunit (Pseudomonas aeruginosa (strain ATCC 15692 / DSM 22644 / CIP 104116 / JCM 14847 / LMG 12228 / 1C / PRS 101 / PAO1)).